The primary structure comprises 445 residues: Serine/threonine-protein kinase Nek2 (445 aa).

The Protein kinase domain occupies 8–271; it reads YEVLYTIGTG…VEEILENPLI (264 aa). Residues 14–22 and Lys37 contribute to the ATP site; that span reads IGTGSYGRC. The active-site Proton acceptor is Asp141. Thr170 is subject to Phosphothreonine; by autocatalysis. Phosphoserine; by autocatalysis is present on Ser171. Thr175 and Thr179 each carry phosphothreonine; by autocatalysis. Ser184 bears the Phosphoserine mark. Phosphoserine; by autocatalysis is present on Ser241. An interaction with PCNT region spans residues 264–445; it reads EILENPLIAD…LKSRQILGMR (182 aa). A phosphoserine mark is found at Ser296 and Ser300. The tract at residues 301–445 is interaction with CEP85; that stretch reads PVLSELKLKE…LKSRQILGMR (145 aa). Residues 303–362 adopt a coiled-coil conformation; that stretch reads LSELKLKEIQLQERERALKAREERLEQKEQELCVRERLAEDKLARAENLLKNYSLLKERK. The segment at 306–334 is leucine-zipper; sequence LKLKEIQLQERERALKAREERLEQKEQEL. The tract at residues 329–445 is necessary for interaction with MAD1L1; that stretch reads QKEQELCVRE…LKSRQILGMR (117 aa). Residues 333 to 370 are required for microtubule binding and for localization to the centrosomes; sequence ELCVRERLAEDKLARAENLLKNYSLLKERKFLSLASNP. Ser356 and Ser365 each carry phosphoserine; by STK3/MST2. Residues Ser387, Ser390, Ser397, and Ser402 each carry the phosphoserine modification. Residues 403–439 form an interaction with SAV1 and STK3/MST2 region; that stretch reads QLTSKSKCKDLKKRLHAAQLRAQALSDIEKNYQLKSR. At Ser406 the chain carries Phosphoserine; by STK3/MST2. Residues 406–430 adopt a coiled-coil conformation; the sequence is SKSKCKDLKKRLHAAQLRAQALSDI. Phosphoserine is present on Ser428. Position 438 is a phosphoserine; by STK3/MST2 (Ser438).

Belongs to the protein kinase superfamily. NEK Ser/Thr protein kinase family. NIMA subfamily. Isoform 1, isoform 2 and isoform 4 form homo- and heterodimers. Interacts with NECAB3 and HMGA2. Isoform 1 interacts with CDC20, CTNB1, MAD1L1, MAPK, NEK11, NPM1, NDC80, PCNT and SGO1. Isoform 1 interacts with STK3/MST2 (via SARAH domain) and SAV1 (via SARAH domain). Isoform 1 and isoform 2 interact with MAD2L1. Isoform 1 and isoform 4 interact with PPP1CA and PPP1CC. Interacts with CEP68; the interaction leads to phosphorylation of CEP68. Interacts with CNTLN; the interaction leads to phosphorylation of CNTLN. Isoform 1 interacts with CEP85. Interacts with CCDC102B; the interaction leads to phosphorylation of CCDC102B. Mg(2+) serves as cofactor. Activated by autophosphorylation. Protein phosphatase 1 represses autophosphorylation and activation of isoform 1 by dephosphorylation. Phosphorylation by STK3/MST2 is necessary for its localization to the centrosome. In terms of tissue distribution, isoform 1 and isoform 2 are expressed in peripheral blood T-cells and a wide variety of transformed cell types. Isoform 1 and isoform 4 are expressed in the testis. Up-regulated in various cancer cell lines, as well as primary breast tumors.

Its subcellular location is the nucleus. The protein resides in the nucleolus. The protein localises to the cytoplasm. It is found in the cytoskeleton. It localises to the microtubule organizing center. Its subcellular location is the centrosome. The protein resides in the spindle pole. The protein localises to the chromosome. It is found in the centromere. It localises to the kinetochore. The enzyme catalyses L-seryl-[protein] + ATP = O-phospho-L-seryl-[protein] + ADP + H(+). It catalyses the reaction L-threonyl-[protein] + ATP = O-phospho-L-threonyl-[protein] + ADP + H(+). Its activity is regulated as follows. Isoform 1 is inhibited by ionizing radiation in the presence of PPP1CA. Its catalytic activity is inhibited by the inhibitor CCT241950. In the presence of this inhibitor, displays an autoinhibited conformation: Tyr-70 side chain points into the active site, interacts with the activation loop, and blocks the alphaC helix. Protein kinase which is involved in the control of centrosome separation and bipolar spindle formation in mitotic cells and chromatin condensation in meiotic cells. Regulates centrosome separation (essential for the formation of bipolar spindles and high-fidelity chromosome separation) by phosphorylating centrosomal proteins such as CROCC, CEP250 and NINL, resulting in their displacement from the centrosomes. Regulates kinetochore microtubule attachment stability in mitosis via phosphorylation of NDC80. Involved in regulation of mitotic checkpoint protein complex via phosphorylation of CDC20 and MAD2L1. Plays an active role in chromatin condensation during the first meiotic division through phosphorylation of HMGA2. Phosphorylates: PPP1CC; SGO1; NECAB3 and NPM1. Essential for localization of MAD2L1 to kinetochore and MAPK1 and NPM1 to the centrosome. Phosphorylates CEP68 and CNTLN directly or indirectly. NEK2-mediated phosphorylation of CEP68 promotes CEP68 dissociation from the centrosome and its degradation at the onset of mitosis. Involved in the regulation of centrosome disjunction. Phosphorylates CCDC102B either directly or indirectly which causes CCDC102B to dissociate from the centrosome and allows for centrosome separation. Its function is as follows. Phosphorylates and activates NEK11 in G1/S-arrested cells. In terms of biological role, not present in the nucleolus and, in contrast to isoform 1, does not phosphorylate and activate NEK11 in G1/S-arrested cells. The chain is Serine/threonine-protein kinase Nek2 (NEK2) from Homo sapiens (Human).